Reading from the N-terminus, the 54-residue chain is MAVSQLMQNLTKQLLHVRERKTDVMQEGETAKELNYEGEDMQATSSAQNRQTSV.

Over residues 23–35 (DVMQEGETAKELN) the composition is skewed to basic and acidic residues. Residues 23-54 (DVMQEGETAKELNYEGEDMQATSSAQNRQTSV) form a disordered region. The segment covering 42 to 54 (QATSSAQNRQTSV) has biased composition (polar residues).

This is an uncharacterized protein from Bacillus subtilis (strain 168).